We begin with the raw amino-acid sequence, 61 residues long: Alpha-conotoxine-like Am1.4 (61 aa).

The N-terminal stretch at 1-21 (MGMRMMFTVFLLVVLATTVVS) is a signal peptide. Positions 22-44 (FMSGRASHGRNAAASDLIALTIK) are excised as a propeptide.

The protein belongs to the conotoxin A superfamily. In terms of processing, is not hydroxylated. Contains 2 disulfide bonds. As to expression, expressed by the venom duct.

The protein localises to the secreted. Functionally, alpha-conotoxins act on postsynaptic membranes, they bind to the nicotinic acetylcholine receptors (nAChR) and thus inhibit them. This is Alpha-conotoxine-like Am1.4 from Conus amadis (Amadis cone).